We begin with the raw amino-acid sequence, 115 residues long: MNLMLTLLTNTLLASLLVLIAFWLPQLNIYAEKTSPYECGFDPMGSARLPFSMKFFLVAITFLLFDLEIALLLPLPWASQTTNLNTMLIMALILISLLAISLAYEWTQKGLEWTE.

Helical transmembrane passes span 3–23, 55–75, and 84–104; these read LMLTLLTNTLLASLLVLIAFW, FFLVAITFLLFDLEIALLLPL, and LNTMLIMALILISLLAISLAY.

It belongs to the complex I subunit 3 family. Core subunit of respiratory chain NADH dehydrogenase (Complex I) which is composed of 45 different subunits. Interacts with TMEM186. Interacts with TMEM242.

The protein resides in the mitochondrion inner membrane. The catalysed reaction is a ubiquinone + NADH + 5 H(+)(in) = a ubiquinol + NAD(+) + 4 H(+)(out). Core subunit of the mitochondrial membrane respiratory chain NADH dehydrogenase (Complex I) which catalyzes electron transfer from NADH through the respiratory chain, using ubiquinone as an electron acceptor. Essential for the catalytic activity of complex I. In Equus asinus (Donkey), this protein is NADH-ubiquinone oxidoreductase chain 3.